The sequence spans 448 residues: Probable glycine dehydrogenase (decarboxylating) subunit 1 (448 aa).

Belongs to the GcvP family. N-terminal subunit subfamily. The glycine cleavage system is composed of four proteins: P, T, L and H. In this organism, the P 'protein' is a heterodimer of two subunits.

It carries out the reaction N(6)-[(R)-lipoyl]-L-lysyl-[glycine-cleavage complex H protein] + glycine + H(+) = N(6)-[(R)-S(8)-aminomethyldihydrolipoyl]-L-lysyl-[glycine-cleavage complex H protein] + CO2. Functionally, the glycine cleavage system catalyzes the degradation of glycine. The P protein binds the alpha-amino group of glycine through its pyridoxal phosphate cofactor; CO(2) is released and the remaining methylamine moiety is then transferred to the lipoamide cofactor of the H protein. The protein is Probable glycine dehydrogenase (decarboxylating) subunit 1 (gcvPA) of Bacillus subtilis (strain 168).